Reading from the N-terminus, the 380-residue chain is Erythronate-4-phosphate dehydrogenase (380 aa).

Substrate-binding residues include serine 45 and threonine 66. NAD(+)-binding positions include aspartate 146, threonine 174, 205-207, and aspartate 231; that span reads ASR. Arginine 207 is a catalytic residue. The active site involves glutamate 236. Catalysis depends on histidine 253, which acts as the Proton donor. Glycine 256 provides a ligand contact to NAD(+). Tyrosine 257 lines the substrate pocket.

This sequence belongs to the D-isomer specific 2-hydroxyacid dehydrogenase family. PdxB subfamily. Homodimer.

Its subcellular location is the cytoplasm. The catalysed reaction is 4-phospho-D-erythronate + NAD(+) = (R)-3-hydroxy-2-oxo-4-phosphooxybutanoate + NADH + H(+). The protein operates within cofactor biosynthesis; pyridoxine 5'-phosphate biosynthesis; pyridoxine 5'-phosphate from D-erythrose 4-phosphate: step 2/5. Catalyzes the oxidation of erythronate-4-phosphate to 3-hydroxy-2-oxo-4-phosphonooxybutanoate. The protein is Erythronate-4-phosphate dehydrogenase of Pseudomonas fluorescens (strain SBW25).